We begin with the raw amino-acid sequence, 45 residues long: Large ribosomal subunit protein bL34 (45 aa).

A disordered region spans residues 26–45 (RAGRSILSARRSKGRSQLSA).

This sequence belongs to the bacterial ribosomal protein bL34 family.

This chain is Large ribosomal subunit protein bL34, found in Parafrankia sp. (strain EAN1pec).